The following is an 847-amino-acid chain: Alpha-glucuronidase A (847 aa).

The N-terminal stretch at 1-22 (MRSFLLLTALLGVAAVAEDGLA) is a signal peptide. N48, N78, N227, N315, N349, N457, N472, N534, N583, N689, N738, N739, and N769 each carry an N-linked (GlcNAc...) asparagine glycan.

Belongs to the glycosyl hydrolase 67 family.

It is found in the secreted. The enzyme catalyses an alpha-D-glucuronoside + H2O = D-glucuronate + an alcohol. Functionally, alpha-glucuronidase involved in the hydrolysis of xylan, a major structural heterogeneous polysaccharide found in plant biomass representing the second most abundant polysaccharide in the biosphere, after cellulose. Releases 4-O-methylglucuronic acid from xylan. This is Alpha-glucuronidase A (aguA) from Emericella nidulans (strain FGSC A4 / ATCC 38163 / CBS 112.46 / NRRL 194 / M139) (Aspergillus nidulans).